The chain runs to 299 residues: S-formylglutathione hydrolase (299 aa).

The Cu cation site is built by M1 and H140. Catalysis depends on charge relay system residues S161, D241, and H276.

Belongs to the esterase D family. Monomer.

It is found in the cytoplasm. It catalyses the reaction S-formylglutathione + H2O = formate + glutathione + H(+). Its function is as follows. Serine hydrolase involved in the detoxification of formaldehyde. This chain is S-formylglutathione hydrolase, found in Saccharomyces cerevisiae (strain ATCC 204508 / S288c) (Baker's yeast).